The sequence spans 609 residues: Glutamine--fructose-6-phosphate aminotransferase [isomerizing] (609 aa).

Cysteine 2 serves as the catalytic Nucleophile; for GATase activity. The Glutamine amidotransferase type-2 domain occupies 2–218 (CGIVGAIAQR…EGDIAEITRR (217 aa)). 2 SIS domains span residues 286 to 426 (ADEL…LKGL) and 458 to 599 (LAED…VDQP). Lysine 604 functions as the For Fru-6P isomerization activity in the catalytic mechanism.

In terms of assembly, homodimer.

The protein resides in the cytoplasm. It carries out the reaction D-fructose 6-phosphate + L-glutamine = D-glucosamine 6-phosphate + L-glutamate. In terms of biological role, catalyzes the first step in hexosamine metabolism, converting fructose-6P into glucosamine-6P using glutamine as a nitrogen source. The sequence is that of Glutamine--fructose-6-phosphate aminotransferase [isomerizing] from Escherichia coli O6:H1 (strain CFT073 / ATCC 700928 / UPEC).